Consider the following 254-residue polypeptide: NAD-dependent protein deacetylase 1 (254 aa).

The region spanning 3 to 252 (VDFTTDELDE…PKLLDRLRGM (250 aa)) is the Deacetylase sirtuin-type domain. NAD(+) contacts are provided by Ala29, Thr33, Phe40, Arg41, Gln105, Val107, Asp108, and His123. Phe40 is a binding site for nicotinamide. The nicotinamide site is built by Val107 and Asp108. The active-site Proton acceptor is the His123. 4 residues coordinate Zn(2+): Cys131, Cys134, Cys154, and Cys157. Residues Thr195, Ser196, and Asn220 each coordinate NAD(+).

Belongs to the sirtuin family. Class U subfamily. The cofactor is Zn(2+).

The protein localises to the cytoplasm. It catalyses the reaction N(6)-acetyl-L-lysyl-[protein] + NAD(+) + H2O = 2''-O-acetyl-ADP-D-ribose + nicotinamide + L-lysyl-[protein]. Its function is as follows. NAD-dependent protein deacetylase which modulates the activities of several enzymes which are inactive in their acetylated form. Deacetylates the N-terminal lysine residue of Alba, the major archaeal chromatin protein and that, in turn, increases Alba's DNA binding affinity, thereby repressing transcription. The chain is NAD-dependent protein deacetylase 1 from Pyrobaculum aerophilum (strain ATCC 51768 / DSM 7523 / JCM 9630 / CIP 104966 / NBRC 100827 / IM2).